Reading from the N-terminus, the 227-residue chain is NAD(P)H-quinone oxidoreductase subunit K, chloroplastic (227 aa).

Residues Cys-43, Cys-44, Cys-108, and Cys-139 each coordinate [4Fe-4S] cluster.

The protein belongs to the complex I 20 kDa subunit family. In terms of assembly, NDH is composed of at least 16 different subunits, 5 of which are encoded in the nucleus. [4Fe-4S] cluster is required as a cofactor.

The protein localises to the plastid. Its subcellular location is the chloroplast thylakoid membrane. The enzyme catalyses a plastoquinone + NADH + (n+1) H(+)(in) = a plastoquinol + NAD(+) + n H(+)(out). It catalyses the reaction a plastoquinone + NADPH + (n+1) H(+)(in) = a plastoquinol + NADP(+) + n H(+)(out). NDH shuttles electrons from NAD(P)H:plastoquinone, via FMN and iron-sulfur (Fe-S) centers, to quinones in the photosynthetic chain and possibly in a chloroplast respiratory chain. It has NADH- and deamino-NADH-specific dehydrogenase activity, using ferricyanide or quinones as acceptors. The immediate electron acceptor for the enzyme in this species is believed to be plastoquinone. Couples the redox reaction to proton translocation, and thus conserves the redox energy in a proton gradient. The sequence is that of NAD(P)H-quinone oxidoreductase subunit K, chloroplastic from Pisum sativum (Garden pea).